Consider the following 507-residue polypeptide: Glycerol kinase (507 aa).

Threonine 14 lines the ADP pocket. 3 residues coordinate ATP: threonine 14, threonine 15, and serine 16. Threonine 14 provides a ligand contact to sn-glycerol 3-phosphate. Arginine 18 contacts ADP. Arginine 84, glutamate 85, tyrosine 136, and aspartate 246 together coordinate sn-glycerol 3-phosphate. Residues arginine 84, glutamate 85, tyrosine 136, aspartate 246, and glutamine 247 each coordinate glycerol. ADP contacts are provided by threonine 268 and glycine 311. ATP is bound by residues threonine 268, glycine 311, glutamine 315, and glycine 412. ADP is bound by residues glycine 412 and asparagine 416.

It belongs to the FGGY kinase family.

The enzyme catalyses glycerol + ATP = sn-glycerol 3-phosphate + ADP + H(+). Its pathway is polyol metabolism; glycerol degradation via glycerol kinase pathway; sn-glycerol 3-phosphate from glycerol: step 1/1. With respect to regulation, inhibited by fructose 1,6-bisphosphate (FBP). Functionally, key enzyme in the regulation of glycerol uptake and metabolism. Catalyzes the phosphorylation of glycerol to yield sn-glycerol 3-phosphate. This chain is Glycerol kinase, found in Vibrio atlanticus (strain LGP32) (Vibrio splendidus (strain Mel32)).